The sequence spans 195 residues: UPF0316 protein Pcar_2434 (195 aa).

Helical transmembrane passes span 13-33 (LFLLPLLVFFARIIDVSIGTL), 45-65 (WAGVLGFFESLIWVLAISQVM), and 71-91 (VWTYIAFALGFATGNYVGVLI).

It belongs to the UPF0316 family.

The protein resides in the cell membrane. The protein is UPF0316 protein Pcar_2434 of Syntrophotalea carbinolica (strain DSM 2380 / NBRC 103641 / GraBd1) (Pelobacter carbinolicus).